Reading from the N-terminus, the 319-residue chain is Cobalamin biosynthesis protein CbiB (319 aa).

Transmembrane regions (helical) follow at residues 56–76 (VMWV…LALA), 82–102 (WFGW…RSLA), 153–173 (VDGI…LAMA), and 296–316 (LMWV…CGLS).

This sequence belongs to the CobD/CbiB family.

It localises to the cell membrane. Its pathway is cofactor biosynthesis; adenosylcobalamin biosynthesis. In terms of biological role, converts cobyric acid to cobinamide by the addition of aminopropanol on the F carboxylic group. However, the true cosubstrate could be (R)-1-amino-2-propanol O-2-phosphate, leading to cobinamide phosphate. This chain is Cobalamin biosynthesis protein CbiB, found in Salmonella paratyphi A (strain ATCC 9150 / SARB42).